The sequence spans 264 residues: Thymidylate synthase (264 aa).

Position 21 (arginine 21) interacts with dUMP. A (6R)-5,10-methylene-5,6,7,8-tetrahydrofolate-binding site is contributed by histidine 51. 126–127 provides a ligand contact to dUMP; it reads RR. Cysteine 146 serves as the catalytic Nucleophile. Residues 166-169, asparagine 177, and 207-209 contribute to the dUMP site; these read RSVD and HLY. Aspartate 169 serves as a coordination point for (6R)-5,10-methylene-5,6,7,8-tetrahydrofolate. Alanine 263 provides a ligand contact to (6R)-5,10-methylene-5,6,7,8-tetrahydrofolate.

Belongs to the thymidylate synthase family. Bacterial-type ThyA subfamily. Homodimer.

It is found in the cytoplasm. The catalysed reaction is dUMP + (6R)-5,10-methylene-5,6,7,8-tetrahydrofolate = 7,8-dihydrofolate + dTMP. The protein operates within pyrimidine metabolism; dTTP biosynthesis. Functionally, catalyzes the reductive methylation of 2'-deoxyuridine-5'-monophosphate (dUMP) to 2'-deoxythymidine-5'-monophosphate (dTMP) while utilizing 5,10-methylenetetrahydrofolate (mTHF) as the methyl donor and reductant in the reaction, yielding dihydrofolate (DHF) as a by-product. This enzymatic reaction provides an intracellular de novo source of dTMP, an essential precursor for DNA biosynthesis. In Geobacillus thermodenitrificans (strain NG80-2), this protein is Thymidylate synthase.